Here is a 317-residue protein sequence, read N- to C-terminus: Transaldolase (317 aa).

The active-site Schiff-base intermediate with substrate is Lys-132.

The protein belongs to the transaldolase family. Type 1 subfamily. In terms of assembly, homodimer.

It is found in the cytoplasm. The catalysed reaction is D-sedoheptulose 7-phosphate + D-glyceraldehyde 3-phosphate = D-erythrose 4-phosphate + beta-D-fructose 6-phosphate. It functions in the pathway carbohydrate degradation; pentose phosphate pathway; D-glyceraldehyde 3-phosphate and beta-D-fructose 6-phosphate from D-ribose 5-phosphate and D-xylulose 5-phosphate (non-oxidative stage): step 2/3. Transaldolase is important for the balance of metabolites in the pentose-phosphate pathway. This chain is Transaldolase, found in Haemophilus influenzae (strain 86-028NP).